A 573-amino-acid chain; its full sequence is Flagellin B (573 aa).

This sequence belongs to the bacterial flagellin family. In terms of assembly, heteromer of FlaA and FlaB. A flagellar filament composed exclusively of FlaA is indistinguishable in length from that of the wild-type and shows a slight reduction in motility. The flagellar filament composed exclusively of the FlaB is severely truncated in length and greatly reduced in motility. Thus, while both flagellins are not necessary for motility, both are required for a fully active flagellar filament.

The protein resides in the secreted. It is found in the bacterial flagellum. Its function is as follows. Flagellin is the subunit protein which polymerizes to form the filaments of bacterial flagella. The chain is Flagellin B (flaB) from Campylobacter coli.